Here is a 144-residue protein sequence, read N- to C-terminus: Large ribosomal subunit protein uL16 (144 aa).

It belongs to the universal ribosomal protein uL16 family. Part of the 50S ribosomal subunit.

In terms of biological role, binds 23S rRNA and is also seen to make contacts with the A and possibly P site tRNAs. This Porphyromonas gingivalis (strain ATCC 33277 / DSM 20709 / CIP 103683 / JCM 12257 / NCTC 11834 / 2561) protein is Large ribosomal subunit protein uL16.